Consider the following 169-residue polypeptide: Cell division inhibitor SulA (169 aa).

Residues 106–112 (ALRTGNY) form a ftsZ binding region. Residues 162–169 (KIHSNLYH) form a lon protease binding region.

It belongs to the SulA family. In terms of assembly, interacts with FtsZ. Post-translationally, is rapidly cleaved and degraded by the Lon protease once DNA damage is repaired.

Functionally, component of the SOS system and an inhibitor of cell division. Accumulation of SulA causes rapid cessation of cell division and the appearance of long, non-septate filaments. In the presence of GTP, binds a polymerization-competent form of FtsZ in a 1:1 ratio, thus inhibiting FtsZ polymerization and therefore preventing it from participating in the assembly of the Z ring. This mechanism prevents the premature segregation of damaged DNA to daughter cells during cell division. The protein is Cell division inhibitor SulA of Salmonella gallinarum (strain 287/91 / NCTC 13346).